We begin with the raw amino-acid sequence, 258 residues long: RIO-type serine/threonine-protein kinase Rio1 (258 aa).

A Protein kinase domain is found at 49 to 258; sequence TAMGGVISTG…EEMLKEVKGE (210 aa). Residues 55-63 and Lys-80 contribute to the ATP site; that span reads ISTGKEANV. Ser-108 is subject to Phosphoserine; by autocatalysis. ATP is bound by residues Glu-148 and Ile-150. The active-site Proton acceptor is Asp-196. ATP is bound by residues Tyr-200, Asn-201, and Asp-212. 2 residues coordinate Mg(2+): Asn-201 and Asp-212. The active-site 4-aspartylphosphate intermediate is the Asp-212.

This sequence belongs to the protein kinase superfamily. RIO-type Ser/Thr kinase family. Mg(2+) serves as cofactor.

The enzyme catalyses L-seryl-[protein] + ATP = O-phospho-L-seryl-[protein] + ADP + H(+). The catalysed reaction is L-threonyl-[protein] + ATP = O-phospho-L-threonyl-[protein] + ADP + H(+). Its function is as follows. Autophosphorylation of the rio1 protein is not necessary for maintenance of kinase activity. Prefers ATP over GTP. The yeast ortholog is involved in ribosome biogenesis. Despite the protein kinase domain is proposed to act predominantly as an ATPase. The chain is RIO-type serine/threonine-protein kinase Rio1 (rio1) from Archaeoglobus fulgidus (strain ATCC 49558 / DSM 4304 / JCM 9628 / NBRC 100126 / VC-16).